Consider the following 99-residue polypeptide: DNA-directed RNA polymerase subunit omega (99 aa).

The protein belongs to the RNA polymerase subunit omega family. As to quaternary structure, the RNAP catalytic core consists of 2 alpha, 1 beta, 1 beta' and 1 omega subunit. When a sigma factor is associated with the core the holoenzyme is formed, which can initiate transcription.

The catalysed reaction is RNA(n) + a ribonucleoside 5'-triphosphate = RNA(n+1) + diphosphate. Functionally, promotes RNA polymerase assembly. Latches the N- and C-terminal regions of the beta' subunit thereby facilitating its interaction with the beta and alpha subunits. In Deinococcus deserti (strain DSM 17065 / CIP 109153 / LMG 22923 / VCD115), this protein is DNA-directed RNA polymerase subunit omega.